Here is a 202-residue protein sequence, read N- to C-terminus: uncharacterized protein (202 aa).

An Isoglutamyl lysine isopeptide (Lys-Gln) (interchain with Q-Cter in protein Pup) cross-link involves residue lysine 136.

This is an uncharacterized protein from Mycobacterium tuberculosis (strain ATCC 25618 / H37Rv).